The primary structure comprises 512 residues: MDLKESPSEGSLQPSSIQIFANTSTLHGIRHIFVYGPLTIRRVLWAVAFVGSLGLLLVESSERVSYYFSYQHVTKVDEVVAQSLVFPAVTLCNLNGFRFSRLTTNDLYHAGELLALLDVNLQIPDPHLADPTVLEALRQKANFKHYKPKQFSMLEFLHRVGHDLKDMMLYCKFKGQECGHQDFTTVFTKYGKCYMFNSGEDGKPLLTTVKGGTGNGLEIMLDIQQDEYLPIWGETEETTFEAGVKVQIHSQSEPPFIQELGFGVAPGFQTFVATQEQRLTYLPPPWGECRSSEMGLDFFPVYSITACRIDCETRYIVENCNCRMVHMPGDAPFCTPEQHKECAEPALGLLAEKDSNYCLCRTPCNLTRYNKELSMVKIPSKTSAKYLEKKFNKSEKYISENILVLDIFFEALNYETIEQKKAYEVAALLGDIGGQMGLFIGASILTILELFDYIYELIKEKLLDLLGKEEEEGSHDENMSTCDTMPNHSETISHTVNVPLQTALGTLEEIAC.

Residues 1 to 37 (MDLKESPSEGSLQPSSIQIFANTSTLHGIRHIFVYGP) lie on the Cytoplasmic side of the membrane. Ser8 and Ser11 each carry phosphoserine. The chain crosses the membrane as a helical span at residues 38–58 (LTIRRVLWAVAFVGSLGLLLV). The Extracellular portion of the chain corresponds to 59-427 (ESSERVSYYF…EQKKAYEVAA (369 aa)). 6 cysteine pairs are disulfide-bonded: Cys92/Cys193, Cys289/Cys364, Cys307/Cys360, Cys311/Cys358, Cys320/Cys342, and Cys322/Cys334. Asn365 and Asn392 each carry an N-linked (GlcNAc...) asparagine glycan. A helical membrane pass occupies residues 428–448 (LLGDIGGQMGLFIGASILTIL). The GAS motif; ion selectivity filter motif lies at 441-443 (GAS). Topologically, residues 449–512 (ELFDYIYELI…ALGTLEEIAC (64 aa)) are cytoplasmic.

Belongs to the amiloride-sensitive sodium channel (TC 1.A.6) family. ASIC2 subfamily. Can form homotrimers. Heterotrimer; forms functional heterotrimers producing channel with different properties. Forms heterotrimers with ASIC1; while ASIC1 determines current amplitude, ASIC2 influences the properties of the current. Forms heterotrimers with ASIC3; resulting in channels with distinct properties. Interacts with STOM; STOM regulates the gating of ASIC2-containing channels. Interacts with PICK1; promotes ASIC3 phosphorylation by PKC and activation of ASIC2/ASIC3 heterotrimers. Expressed by sensory neurons. Expressed by nociceptive sensory neurons, spiral ganglion (SG) neurons and the retina (at protein level). Expressed in outer nuclear layer of retina (photoreceptors) and to a lower extent in distal and proximal inner nuclear layer.

It is found in the cell membrane. The enzyme catalyses Na(+)(in) = Na(+)(out). It catalyses the reaction K(+)(in) = K(+)(out). It carries out the reaction Li(+)(in) = Li(+)(out). Inhibited by the diuretic drug amiloride. Forms pH-gated trimeric sodium channels that act as postsynaptic excitatory sensors in the nervous system. Upon extracellular acidification, these channels generate rapid, transient inward currents that fully desensitize. Highly selective for sodium, they are permeable to other cations. By forming heterotrimeric channels with ASIC1, could contribute to synaptic plasticity, learning, and memory. Additionally, as acid sensors at nerve terminals, plays a role in mechanosensation and phototransduction. Its function is as follows. Has no pH-gated sodium channel activity per se but can associate with other ASICs to produce functional channels with specific properties. The protein is Acid-sensing ion channel 2 of Mus musculus (Mouse).